The primary structure comprises 217 residues: UPF0502 protein ETA_20480 (217 aa).

Residues 169-188 (GEVDESSRADGHHPDDHRGD) form a disordered region. Basic and acidic residues predominate over residues 173–188 (ESSRADGHHPDDHRGD).

The protein belongs to the UPF0502 family.

The chain is UPF0502 protein ETA_20480 from Erwinia tasmaniensis (strain DSM 17950 / CFBP 7177 / CIP 109463 / NCPPB 4357 / Et1/99).